The chain runs to 391 residues: Septation protein etd1 (391 aa).

A disordered region spans residues Met-49–Lys-68.

Involved in septation. This Schizosaccharomyces pombe (strain 972 / ATCC 24843) (Fission yeast) protein is Septation protein etd1 (etd1).